The chain runs to 516 residues: Bifunctional purine biosynthesis protein PurH (516 aa).

The MGS-like domain occupies 1–146; it reads MAPFALLSVS…KNHADVAVLT (146 aa).

It belongs to the PurH family.

The catalysed reaction is (6R)-10-formyltetrahydrofolate + 5-amino-1-(5-phospho-beta-D-ribosyl)imidazole-4-carboxamide = 5-formamido-1-(5-phospho-D-ribosyl)imidazole-4-carboxamide + (6S)-5,6,7,8-tetrahydrofolate. It carries out the reaction IMP + H2O = 5-formamido-1-(5-phospho-D-ribosyl)imidazole-4-carboxamide. Its pathway is purine metabolism; IMP biosynthesis via de novo pathway; 5-formamido-1-(5-phospho-D-ribosyl)imidazole-4-carboxamide from 5-amino-1-(5-phospho-D-ribosyl)imidazole-4-carboxamide (10-formyl THF route): step 1/1. It functions in the pathway purine metabolism; IMP biosynthesis via de novo pathway; IMP from 5-formamido-1-(5-phospho-D-ribosyl)imidazole-4-carboxamide: step 1/1. The chain is Bifunctional purine biosynthesis protein PurH from Parasynechococcus marenigrum (strain WH8102).